A 226-amino-acid polypeptide reads, in one-letter code: B-cell antigen receptor complex-associated protein alpha chain (226 aa).

The signal sequence occupies residues 1–32 (MPGGPGVLQALPATIFLLFLLSAVYLGPGCQA). Residues 33-116 (LWMHKVPASL…RVQEGNESYQ (84 aa)) form the Ig-like C2-type domain. The Extracellular portion of the chain corresponds to 33–143 (LWMHKVPASL…LDMGEGTKNR (111 aa)). Cys-54 and Cys-106 are joined by a disulfide. Asn-57, Asn-63, Asn-73, Asn-88, Asn-97, and Asn-112 each carry an N-linked (GlcNAc...) asparagine glycan. A helical membrane pass occupies residues 144 to 165 (IITAEGIILLFCAVVPGTLLLF). Topologically, residues 166 to 226 (RKRWQNEKLG…NIGDVQLEKP (61 aa)) are cytoplasmic. Residues 177–205 (DAGDEYEDENLYEGLNLDDCSMYEDISRG) form the ITAM domain. Phosphotyrosine; by SRC-type Tyr-kinases is present on residues Tyr-188 and Tyr-199. Arg-204 is subject to Asymmetric dimethylarginine; by PRMT1. Phosphotyrosine; by Tyr-kinases is present on Tyr-210.

In terms of assembly, heterodimer of alpha and beta chains; disulfide-linked. Part of the B-cell antigen receptor complex where the alpha/beta chain heterodimer is non-covalently associated with an antigen-specific membrane-bound surface immunoglobulin of two heavy chains and two light chains. Interacts through its phosphorylated ITAM domain with the SH2 domains of SYK which stimulates SYK autophosphorylation and activation. Also interacts, when phosphorylated on Tyr-210, with the SH2 domain of BLNK/SLP65, bringing BLNK into proximity with SYK and allowing SYK to phosphorylate BLNK which is necessary for trafficking of the BCR to late endosomes. Interacts with Src-family tyrosine kinases including FYN and LYN, increasing their activity. In terms of processing, phosphorylated on tyrosine, serine and threonine residues upon B-cell activation. Phosphorylation of tyrosine residues by Src-family kinases is an early and essential feature of the BCR signaling cascade. The phosphorylated tyrosines serve as docking sites for SH2-domain containing kinases, leading to their activation which in turn leads to phosphorylation of downstream targets. Phosphorylated by LYN. Phosphorylation of serine and threonine residues may prevent subsequent tyrosine phosphorylation. Arginine methylation in the ITAM domain may interfere with the binding of SYK. It promotes signals leading to B-cell differentiation. In terms of tissue distribution, B-cells.

It is found in the cell membrane. Its function is as follows. Required in cooperation with CD79B for initiation of the signal transduction cascade activated by binding of antigen to the B-cell antigen receptor complex (BCR) which leads to internalization of the complex, trafficking to late endosomes and antigen presentation. Also required for BCR surface expression and for efficient differentiation of pro- and pre-B-cells. Stimulates SYK autophosphorylation and activation. Binds to BLNK, bringing BLNK into proximity with SYK and allowing SYK to phosphorylate BLNK. Also interacts with and increases activity of some Src-family tyrosine kinases. Represses BCR signaling during development of immature B-cells. This chain is B-cell antigen receptor complex-associated protein alpha chain (CD79A), found in Homo sapiens (Human).